The primary structure comprises 252 residues: MVSVCQVERNDVENLNKELFYSYIKSNKPVVFEKYRSQAIEKWTPDYLLSIIGDREVHVNMCTFGSMSDIVPMKFSEYLNKTLKNEFPINDSNGERIKKINKPYLRNFGMLDEFPILKEDVKNNESIFNKDVHNMVVMGSFIGCKDSATNFHKDTGENLVSVIHGKKFIVLIAPSDETNIKSKLSHDIEVQFDSNDFGSPIELHPAFSDCSKIYTTILTQGQSLFIPVGWIHYVHNIDTTISVSCWGKEMIM.

The JmjC domain maps to 103 to 252 (PYLRNFGMLD…VSCWGKEMIM (150 aa)).

In Dictyostelium discoideum (Social amoeba), this protein is JmjC domain-containing protein A (jcdA).